We begin with the raw amino-acid sequence, 138 residues long: Ribosome maturation factor RimP (138 aa).

This sequence belongs to the RimP family.

It is found in the cytoplasm. Its function is as follows. Required for maturation of 30S ribosomal subunits. The polypeptide is Ribosome maturation factor RimP (Campylobacter concisus (strain 13826)).